Consider the following 79-residue polypeptide: uncharacterized protein (79 aa).

This is an uncharacterized protein from Haemophilus influenzae (strain ATCC 51907 / DSM 11121 / KW20 / Rd).